The following is a 378-amino-acid chain: Probable S-(hydroxymethyl)glutathione dehydrogenase 1 (378 aa).

Cys47 serves as a coordination point for Zn(2+). His48 provides a ligand contact to NAD(+). Residues His69, Glu70, Cys99, Cys102, Cys105, Cys113, and Cys176 each coordinate Zn(2+). Residues 201 to 206 (GCGCVG), Asp225, 293 to 295 (IGV), and 318 to 320 (SAF) contribute to the NAD(+) site.

It belongs to the zinc-containing alcohol dehydrogenase family. Class-III subfamily. It depends on Zn(2+) as a cofactor.

It carries out the reaction a primary alcohol + NAD(+) = an aldehyde + NADH + H(+). The enzyme catalyses a secondary alcohol + NAD(+) = a ketone + NADH + H(+). The catalysed reaction is S-(hydroxymethyl)glutathione + NADP(+) = S-formylglutathione + NADPH + H(+). It catalyses the reaction S-(hydroxymethyl)glutathione + NAD(+) = S-formylglutathione + NADH + H(+). It carries out the reaction S-nitrosoglutathione + NADH + H(+) = S-(hydroxysulfenamide)glutathione + NAD(+). Functionally, oxidizes long-chain alcohols and, in the presence of glutathione, is able to oxidize formaldehyde. Also acts as a S-nitroso-glutathione reductase by catalyzing the NADH-dependent reduction of S-nitrosoglutathione, thereby regulating protein S-nitrosylation. The sequence is that of Probable S-(hydroxymethyl)glutathione dehydrogenase 1 from Schizosaccharomyces pombe (strain 972 / ATCC 24843) (Fission yeast).